The following is a 423-amino-acid chain: Pentamidine resistance factor, mitochondrial (423 aa).

The helical transmembrane segment at 199-219 (PVFFTLVFIFEEVSVLIFTFF) threads the bilayer.

Interacts with COX18. This interaction may be essential for its insertion into mitochondrial inner membrane.

The protein resides in the mitochondrion inner membrane. Probably involved in mitochondrial export. Confers resistance to the anti-pneumocystis carinii drug pentamidine. May act by the removal of pentamidine, or its damage targets, from the matrix by an active-transport mechanism. This Saccharomyces cerevisiae (strain ATCC 204508 / S288c) (Baker's yeast) protein is Pentamidine resistance factor, mitochondrial (PNT1).